A 280-amino-acid polypeptide reads, in one-letter code: Threonylcarbamoyl-AMP synthase (280 aa).

Residues 1-56 constitute a mitochondrion transit peptide; sequence MSTARPCAGLRAAVAAGMGLSDGPAGSSRGCRLLRPPAPAPALPGARLLRLPESEA. S61 bears the Phosphoserine mark. The YrdC-like domain occupies 68-258; the sequence is TEALRAAVAE…KFGIIRSGCA (191 aa).

It belongs to the SUA5 family. In terms of assembly, interacts with RSC1A1.

It is found in the cytoplasm. The protein localises to the mitochondrion. The protein resides in the cell membrane. The catalysed reaction is L-threonine + hydrogencarbonate + ATP = L-threonylcarbamoyladenylate + diphosphate + H2O. Cytoplasmic and mitochondrial threonylcarbamoyl-AMP synthase required for the formation of a threonylcarbamoyl group on adenosine at position 37 (t(6)A37) in tRNAs that read codons beginning with adenine. Catalyzes the conversion of L-threonine, HCO(3)(-)/CO(2) and ATP to give threonylcarbamoyl-AMP (TC-AMP) as the acyladenylate intermediate, with the release of diphosphate. Participates in t(6)A37 formation in cytoplasmic and mitochondrial tRNAs. May regulate the activity of some transporters. This is Threonylcarbamoyl-AMP synthase from Rattus norvegicus (Rat).